The following is a 1122-amino-acid chain: MNSPNESDGMSGREPSLEILPRTSLHSIPVTVEVKPVLPRAMPSSMGGGGGGSPSPVELRGALVGSVDPTLREQQLQQELLALKQQQQLQKQLLFAEFQKQHDHLTRQHEVQLQKHLKQQQEMLAAKQQQEMLAAKRQQELEQQRQREQQRQEELEKQRLEQQLLILRNKEKSKESAIASTEVKLRLQEFLLSKSKEPTPGGLNHSLPQHPKCWGAHHASLDQSSPPQSGPPGTPPSYKLPLPGPYDSRDDFPLRKTASEPNLKVRSRLKQKVAERRSSPLLRRKDGTVISTFKKRAVEITGAGPGASSVCNSAPGSGPSSPNSSHSTIAENGFTGSVPNIPTEMLPQHRALPLDSSPNQFSLYTSPSLPNISLGLQATVTVTNSHLTASPKLSTQQEAERQALQSLRQGGTLTGKFMSTSSIPGCLLGVALEGDGSPHGHASLLQHVLLLEQARQQSTLIAVPLHGQSPLVTGERVATSMRTVGKLPRHRPLSRTQSSPLPQSPQALQQLVMQQQHQQFLEKQKQQQLQLGKILTKTGELPRQPTTHPEETEEELTEQQEVLLGEGALTMPREGSTESESTQEDLEEEDEEDDGEEEEDCIQVKDEEGESGAEEGPDLEEPGAGYKKLFSDAQPLQPLQVYQAPLSLATVPHQALGRTQSSPAAPGGMKSPPDQPVKHLFTTGVVYDTFMLKHQCMCGNTHVHPEHAGRIQSIWSRLQETGLLSKCERIRGRKATLDEIQTVHSEYHTLLYGTSPLNRQKLDSKKLLGPISQKMYAVLPCGGIGVDSDTVWNEMHSSSAVRMAVGCLLELAFKVAAGELKNGFAIIRPPGHHAEESTAMGFCFFNSVAITAKLLQQKLNVGKVLIVDWDIHHGNGTQQAFYNDPSVLYISLHRYDNGNFFPGSGAPEEVGGGPGVGYNVNVAWTGGVDPPIGDVEYLTAFRTVVMPIAHEFSPDVVLVSAGFDAVEGHLSPLGGYSVTARCFGHLTRQLMTLAGGRVVLALEGGHDLTAICDASEACVSALLSVELQPLDEAVLQQKPNINAVATLEKVIEIQSKHWSCVQKFAAGLGRSLREAQAGETEEAETVSAMALLSVGAEQAQAAAAREHSPRPAEEPMEQEPAL.

The segment at 1–24 (MNSPNESDGMSGREPSLEILPRTS) is disordered. Lys35 is covalently cross-linked (Glycyl lysine isopeptide (Lys-Gly) (interchain with G-Cter in SUMO2)). Disordered regions lie at residues 41–60 (AMPS…VELR) and 196–281 (KEPT…SSPL). A compositionally biased stretch (basic and acidic residues) spans 247-258 (DSRDDFPLRKTA). Phosphoserine; by AMPK, CaMK1, SIK1 and PKD/PRKD1 is present on Ser259. A compositionally biased stretch (basic and acidic residues) spans 272–281 (KVAERRSSPL). Thr292 carries the post-translational modification Phosphothreonine; by PKC. Disordered stretches follow at residues 302-343 (GAGP…NIPT) and 481-504 (MRTV…LPQS). Residues 312 to 327 (NSAPGSGPSSPNSSHS) show a composition bias toward low complexity. A compositionally biased stretch (polar residues) spans 328–340 (TIAENGFTGSVPN). Low complexity predominate over residues 494–504 (SRTQSSPLPQS). Ser498 bears the Phosphoserine; by AMPK, CaMK1, SIK1 and PKD/PRKD1 mark. Lys533 carries the N6-acetyllysine modification. The disordered stretch occupies residues 536–625 (TKTGELPRQP…GPDLEEPGAG (90 aa)). Positions 581-621 (STQEDLEEEDEEDDGEEEEDCIQVKDEEGESGAEEGPDLEE) are enriched in acidic residues. Phosphoserine is present on residues Ser611 and Ser661. The segment at 684-1028 (GVVYDTFMLK…VSALLSVELQ (345 aa)) is histone deacetylase. Zn(2+)-binding residues include Cys696, Cys698, His704, and Cys781. The active site involves His833. The Nuclear export signal motif lies at 1081–1122 (EEAETVSAMALLSVGAEQAQAAAAREHSPRPAEEPMEQEPAL). Residues 1097-1122 (EQAQAAAAREHSPRPAEEPMEQEPAL) form a disordered region. A compositionally biased stretch (basic and acidic residues) spans 1104–1113 (AREHSPRPAE). Residue Ser1108 is modified to Phosphoserine.

Belongs to the histone deacetylase family. HD type 2 subfamily. In terms of assembly, interacts with AHRR, BAHD1, BCOR, HDAC7, HDAC9, CTBP1, MEF2C, NCOR2, NRIP1, PHB2 and a 14-3-3 chaperone protein. Interacts with BCL6, DDIT3/CHOP, GRK5, KDM5B and MYOCD. Interacts with EP300 in the presence of TFAP2C. Interacts with ANKRA2. Interacts with CUL7 (as part of the 3M complex); negatively regulated by ANKRA2. Interacts with ZBTB7B; the interaction allows the recruitment of HDAC4 on CD8 loci for deacetylation and possible inhibition of CD8 genes expression. Interacts with RARA. Post-translationally, phosphorylated by AMPK, CaMK1, SIK1 and PRKD1 at Ser-259 and Ser-498. The phosphorylation is required for the export to the cytoplasm and inhibition. Phosphorylated by the PKC kinases PKN1 and PKN2, impairing nuclear import. Phosphorylated by GRK5, leading to nuclear export of HDAC5 and allowing MEF2-mediated transcription. Ubiquitinated. Polyubiquitination however does not lead to its degradation. Ubiquitous.

It is found in the nucleus. It localises to the cytoplasm. The catalysed reaction is N(6)-acetyl-L-lysyl-[histone] + H2O = L-lysyl-[histone] + acetate. Responsible for the deacetylation of lysine residues on the N-terminal part of the core histones (H2A, H2B, H3 and H4). Histone deacetylation gives a tag for epigenetic repression and plays an important role in transcriptional regulation, cell cycle progression and developmental events. Histone deacetylases act via the formation of large multiprotein complexes. Involved in muscle maturation by repressing transcription of myocyte enhancer MEF2C. During muscle differentiation, it shuttles into the cytoplasm, allowing the expression of myocyte enhancer factors. Involved in the MTA1-mediated epigenetic regulation of ESR1 expression in breast cancer. Serves as a corepressor of RARA and causes its deacetylation. In association with RARA, plays a role in the repression of microRNA-10a and thereby in the inflammatory response. The sequence is that of Histone deacetylase 5 (HDAC5) from Homo sapiens (Human).